Reading from the N-terminus, the 227-residue chain is N-(5'-phosphoribosyl)anthranilate isomerase (227 aa).

The protein belongs to the TrpF family.

It carries out the reaction N-(5-phospho-beta-D-ribosyl)anthranilate = 1-(2-carboxyphenylamino)-1-deoxy-D-ribulose 5-phosphate. It functions in the pathway amino-acid biosynthesis; L-tryptophan biosynthesis; L-tryptophan from chorismate: step 3/5. This is N-(5'-phosphoribosyl)anthranilate isomerase from Herminiimonas arsenicoxydans.